A 29-amino-acid polypeptide reads, in one-letter code: Conotoxin pr6a (29 aa).

3 disulfide bridges follow: Cys-2-Cys-20, Cys-9-Cys-24, and Cys-19-Cys-28.

As to expression, expressed by the venom duct.

The protein resides in the secreted. Intraperitoneal injection into fish (1 nmol) provokes hyperactivity and erratic swimming in various directions after 14 minutes. The polypeptide is Conotoxin pr6a (Conus parius (Cone snail)).